The following is a 26-amino-acid chain: M-poneritoxin-Ng1d (26 aa).

Expressed by the venom gland.

The protein resides in the secreted. It localises to the target cell membrane. Has a broad spectrum of activity against both Gram-positive and Gram-negative bacteria and S.cerevisiae. Has insecticidal and hemolytic activities. May act by disrupting the integrity of the bacterial cell membrane. This chain is M-poneritoxin-Ng1d, found in Neoponera goeldii (Ponerine ant).